Consider the following 910-residue polypeptide: Myelin regulatory factor-like protein (910 aa).

The NDT80 DNA-binding region spans 142–405; that stretch reads GCSYPQQPLC…SNPGQFENDS (264 aa). Positions 189 to 208 are disordered; the sequence is RSRSSEVQDPDSEGQNRMPT. The Peptidase S74 domain maps to 451 to 559; that stretch reads SDSRAKQNIQ…KLTNNLEERI (109 aa). A coiled-coil region spans residues 543-575; sequence GAVKQLCKLTNNLEERIEELEIWNRKLARLKRL. Residues 628–648 traverse the membrane as a helical segment; the sequence is LVITLIAVMAFCALTIVALYI. The interval 661–682 is disordered; it reads LPPSNITSSQEPALLPTASSSA. A compositionally biased stretch (polar residues) spans 663–682; it reads PSNITSSQEPALLPTASSSA.

It belongs to the MRF family.

Its subcellular location is the membrane. This is Myelin regulatory factor-like protein (MYRFL) from Homo sapiens (Human).